Consider the following 589-residue polypeptide: L-fucose isomerase (589 aa).

Residues E340 and D364 each act as proton acceptor in the active site. Mn(2+) contacts are provided by E340, D364, and H527.

This sequence belongs to the L-fucose isomerase family. The cofactor is Mn(2+).

The protein resides in the cytoplasm. The catalysed reaction is L-fucose = L-fuculose. It functions in the pathway carbohydrate degradation; L-fucose degradation; L-lactaldehyde and glycerone phosphate from L-fucose: step 1/3. Its function is as follows. Converts the aldose L-fucose into the corresponding ketose L-fuculose. This Haemophilus influenzae (strain ATCC 51907 / DSM 11121 / KW20 / Rd) protein is L-fucose isomerase.